We begin with the raw amino-acid sequence, 150 residues long: Single-stranded DNA-binding protein 1 (150 aa).

The 104-residue stretch at 1 to 104 (MINNVVLVGR…VVADTFQMLE (104 aa)) folds into the SSB domain. The segment covering 103-120 (LESNKTQGQQTSKPQAQN) has biased composition (polar residues). Residues 103-150 (LESNKTQGQQTSKPQAQNKKPQAPDPFKAPAADPFAGGTEISDDDLPF) are disordered. Over residues 121–138 (KKPQAPDPFKAPAADPFA) the composition is skewed to low complexity. The short motif at 145 to 150 (DDDLPF) is the Important for interaction with partner proteins element.

As to quaternary structure, homotetramer.

In terms of biological role, plays an important role in DNA replication, recombination and repair. Binds to ssDNA and to an array of partner proteins to recruit them to their sites of action during DNA metabolism. This is Single-stranded DNA-binding protein 1 (ssb1) from Lactococcus lactis subsp. lactis (strain IL1403) (Streptococcus lactis).